The following is a 119-amino-acid chain: Small ribosomal subunit protein uS10 (119 aa).

Alanine 2 is subject to N-acetylalanine. Lysine 4 participates in a covalent cross-link: Glycyl lysine isopeptide (Lys-Gly) (interchain with G-Cter in ubiquitin). Residue lysine 8 is modified to N6-succinyllysine; alternate. A Glycyl lysine isopeptide (Lys-Gly) (interchain with G-Cter in ubiquitin); alternate cross-link involves residue lysine 8. Position 9 is a phosphothreonine (threonine 9). 2 positions are modified to N6-acetyllysine: lysine 34 and lysine 75. Serine 93 bears the Phosphoserine mark.

It belongs to the universal ribosomal protein uS10 family. In terms of assembly, component of the 40S small ribosomal subunit. In terms of processing, polyubiquitinated by ZNF598 via 'Lys-63'-linked ubiquitin chains when a ribosome has stalled, initiating the ribosome quality control (RQC) pathway to degrade the potentially detrimental aberrant nascent polypeptide. Deubiquitinated by OTUD3 and USP21, antagonizing ZNF598 activity. Post-translationally, ufmylated by UFL1.

The protein localises to the cytoplasm. Component of the small ribosomal subunit. The ribosome is a large ribonucleoprotein complex responsible for the synthesis of proteins in the cell. In Rattus norvegicus (Rat), this protein is Small ribosomal subunit protein uS10 (Rps20).